We begin with the raw amino-acid sequence, 502 residues long: Zinc finger protein 488 (502 aa).

The 123-residue stretch at 8-130 (RSLWTNDSKI…EGEELLVWYD (123 aa)) folds into the SET domain. Y129 contacts S-adenosyl-L-methionine. The C2H2-type 1; atypical zinc finger occupies 151 to 174 (YTCTRCGQAFKNENPFLAHCRFLC). 2 disordered regions span residues 267 to 303 (SEPT…KSSR) and 338 to 361 (PSKR…LDSF). Positions 269–286 (PTDNAQTNESKISKNSAF) are enriched in polar residues. 2 C2H2-type zinc fingers span residues 438–460 (NWCA…MRSH) and 479–501 (LTCP…MTSH).

This sequence belongs to the krueppel C2H2-type zinc-finger protein family. As to expression, expressed in pMN progenitors and oligodendrocyte lineage cells in the embryo with expression declining in oligodendrocytes undergoing differentiation.

It localises to the nucleus. In terms of biological role, transcriptional repressor. May have histone methyltransferase activity. Negatively regulates shh signaling activity in pMN progenitor cells which prevents their switch from motor neuron to oligodendrocyte precursor cell production. Independently of shh activity, also regulates oligodendrocyte formation. This chain is Zinc finger protein 488, found in Danio rerio (Zebrafish).